Reading from the N-terminus, the 429-residue chain is Adenylosuccinate synthetase (429 aa).

GTP contacts are provided by residues 12–18 and 40–42; these read GDEGKGK and GHT. The active-site Proton acceptor is the D13. 2 residues coordinate Mg(2+): D13 and G40. IMP-binding positions include 13–16, 38–41, T129, R143, Q224, T239, and R303; these read DEGK and NAGH. H41 (proton donor) is an active-site residue. 299–305 is a binding site for substrate; that stretch reads ATTGRKR. Residues R305, 331 to 333, and 413 to 415 each bind GTP; these read KLD and SVG.

This sequence belongs to the adenylosuccinate synthetase family. As to quaternary structure, homodimer. Mg(2+) serves as cofactor.

Its subcellular location is the cytoplasm. It carries out the reaction IMP + L-aspartate + GTP = N(6)-(1,2-dicarboxyethyl)-AMP + GDP + phosphate + 2 H(+). The protein operates within purine metabolism; AMP biosynthesis via de novo pathway; AMP from IMP: step 1/2. In terms of biological role, plays an important role in the de novo pathway of purine nucleotide biosynthesis. Catalyzes the first committed step in the biosynthesis of AMP from IMP. The polypeptide is Adenylosuccinate synthetase (Desulfosudis oleivorans (strain DSM 6200 / JCM 39069 / Hxd3) (Desulfococcus oleovorans)).